Consider the following 521-residue polypeptide: MANKGNKKRRQFSLEEKMKVVGAVDSGKRKGDVAKEFGITPSTLSTFLKDRTKFEEKVREASVGPQRKRMRSALYDDIDKAVFAWFQEIHAKNILVTGSVIRKKALNLANMLGYDNFQASVGWLNRFRDRHGIALKAVCREDSDRLMNGLGIDKINEWHAGEIIKLIADYSPDDIFNADETGVFFQLLPQHTLAAKGDHCRGGKKAKQRLTALFCCNASGTEKMRPLIVGRSASPHCLKNIHSLPCDYRANQWAWMTRDLFNEWLMQVDARMKRAERRILLLIDNCSAHNMLPHLERIQVGYLPSNCTAVLQPLNLGIIHTMKVLYQSHLLKQILLKLNSSEDQEEVDIKQAIDMIAAAWWSVKPSTVVKCWQKAGIVPMEFAECDTESAASEPDIAIEKLWHTVAIATCVPNEVNFQDFVTADDDLIISQDTDIIQDMVAGENTSEAGSEDEGEVSLPEQPKVTITEAISSVQKLRQFLSTCVDIPDAIFGQLNGIDEYLMKRVTQTLIDSKITDFLQTK.

The 52-residue stretch at 3-54 (NKGNKKRRQFSLEEKMKVVGAVDSGKRKGDVAKEFGITPSTLSTFLKDRTKF) folds into the HTH psq-type domain. DNA-binding regions (H-T-H motif) lie at residues 30–50 (KGDVAKEFGITPSTLSTFLKD) and 99–130 (SVIRKKALNLANMLGYDNFQASVGWLNRFRDR). Residues 66–137 (QRKRMRSALY…RDRHGIALKA (72 aa)) form the HTH CENPB-type domain. Residues 170–372 (YSPDDIFNAD…VKPSTVVKCW (203 aa)) enclose the DDE-1 domain.

The protein belongs to the tigger transposable element derived protein family.

Its subcellular location is the nucleus. The polypeptide is Tigger transposable element-derived protein 6 (TIGD6) (Homo sapiens (Human)).